We begin with the raw amino-acid sequence, 215 residues long: UPF0319 protein VV2_0960 (215 aa).

Positions 1–21 are cleaved as a signal peptide; sequence MNIIKPLTCILAMSISGLATA.

This sequence belongs to the UPF0319 family.

The sequence is that of UPF0319 protein VV2_0960 from Vibrio vulnificus (strain CMCP6).